The chain runs to 185 residues: CASP-like protein 2C1 (185 aa).

At 1 to 12 (MVAARVSEVKAE) the chain is on the cytoplasmic side. A helical membrane pass occupies residues 13-33 (GVLRGACAALAAAAALLVGLS). Topologically, residues 34 to 52 (TQTETVLLVRKKATVKDVQ) are extracellular. Residues 53 to 73 (ALWVLAMAAAAAAGYHLLQLL) traverse the membrane as a helical segment. Topologically, residues 74 to 105 (KCFYLGRRVGGGASPCRRSSRALAWTCLLLDK) are cytoplasmic. A helical membrane pass occupies residues 106 to 126 (ACAYTTFATTVAAAQACVIAL). Residues 127 to 147 (DGAHALQWTKLCNIYTRFCEQ) lie on the Extracellular side of the membrane. Residues 148–168 (IAGSLVLGMLAAVGTAVLSAA) traverse the membrane as a helical segment. Topologically, residues 169 to 185 (SARNVFRHYSPGTYAAH) are cytoplasmic.

The protein belongs to the Casparian strip membrane proteins (CASP) family. Homodimer and heterodimers.

It localises to the cell membrane. The protein is CASP-like protein 2C1 of Sorghum bicolor (Sorghum).